The following is a 793-amino-acid chain: Serine/threonine-protein phosphatase 1 regulatory subunit GAC1 (793 aa).

A compositionally biased stretch (polar residues) spans 1 to 10; it reads MVIQTATTLS. The disordered stretch occupies residues 1 to 20; that stretch reads MVIQTATTLSPAKARPSFPH. The CBM21 domain maps to 235 to 360; sequence TKYLNGQNVK…NNNGKNYHLF (126 aa). Residues Ser-415 and Ser-424 each carry the phosphoserine modification. Disordered regions lie at residues 450-491 and 616-671; these read LENA…SIDL and TTMD…LNDH. A compositionally biased stretch (polar residues) spans 623-633; it reads KTSTINNSTDT. Over residues 637–648 the composition is skewed to basic and acidic residues; sequence PSKENGTVKENK. Positions 649–665 are enriched in low complexity; that stretch reads SSANSTSAPSSSQNRAS.

Its function is as follows. Regulates the activity of glycogen synthase. It is most probably a regulatory subunit for protein phosphatase type 1. In Saccharomyces cerevisiae (strain ATCC 204508 / S288c) (Baker's yeast), this protein is Serine/threonine-protein phosphatase 1 regulatory subunit GAC1 (GAC1).